We begin with the raw amino-acid sequence, 351 residues long: Phosphoribosylformylglycinamidine cyclo-ligase (351 aa).

This sequence belongs to the AIR synthase family.

It localises to the cytoplasm. The catalysed reaction is 2-formamido-N(1)-(5-O-phospho-beta-D-ribosyl)acetamidine + ATP = 5-amino-1-(5-phospho-beta-D-ribosyl)imidazole + ADP + phosphate + H(+). Its pathway is purine metabolism; IMP biosynthesis via de novo pathway; 5-amino-1-(5-phospho-D-ribosyl)imidazole from N(2)-formyl-N(1)-(5-phospho-D-ribosyl)glycinamide: step 2/2. The polypeptide is Phosphoribosylformylglycinamidine cyclo-ligase (Burkholderia mallei (strain NCTC 10247)).